A 364-amino-acid polypeptide reads, in one-letter code: UDP-3-O-acylglucosamine N-acyltransferase (364 aa).

H257 functions as the Proton acceptor in the catalytic mechanism.

Belongs to the transferase hexapeptide repeat family. LpxD subfamily. As to quaternary structure, homotrimer.

The catalysed reaction is a UDP-3-O-[(3R)-3-hydroxyacyl]-alpha-D-glucosamine + a (3R)-hydroxyacyl-[ACP] = a UDP-2-N,3-O-bis[(3R)-3-hydroxyacyl]-alpha-D-glucosamine + holo-[ACP] + H(+). Its pathway is bacterial outer membrane biogenesis; LPS lipid A biosynthesis. Functionally, catalyzes the N-acylation of UDP-3-O-acylglucosamine using 3-hydroxyacyl-ACP as the acyl donor. Is involved in the biosynthesis of lipid A, a phosphorylated glycolipid that anchors the lipopolysaccharide to the outer membrane of the cell. This Paracoccus denitrificans (strain Pd 1222) protein is UDP-3-O-acylglucosamine N-acyltransferase.